Reading from the N-terminus, the 278-residue chain is Phage-like element PBSX protein XkdB (278 aa).

The segment at residues 58-80 is a DNA-binding region (H-T-H motif); sequence LKAREMAAVFGVSEKTVRRWLEL. 2 disordered regions span residues 117–136 and 239–278; these read SLKERPFSPQTPDTNDRTDI and QHERMKKHDKTNNRTDFGRAEKRETSITGGQTGRIRRKQV. Positions 248–263 are enriched in basic and acidic residues; the sequence is KTNNRTDFGRAEKRET.

The protein to B.subtilis YqaL.

The polypeptide is Phage-like element PBSX protein XkdB (xkdB) (Bacillus subtilis (strain 168)).